The chain runs to 84 residues: Small ribosomal subunit protein bS18A (84 aa).

It belongs to the bacterial ribosomal protein bS18 family. As to quaternary structure, part of the 30S ribosomal subunit. Forms a tight heterodimer with protein bS6.

Binds as a heterodimer with protein bS6 to the central domain of the 16S rRNA, where it helps stabilize the platform of the 30S subunit. This chain is Small ribosomal subunit protein bS18A, found in Mycolicibacterium paratuberculosis (strain ATCC BAA-968 / K-10) (Mycobacterium paratuberculosis).